The primary structure comprises 251 residues: 5'-nucleotidase SurE (251 aa).

A divalent metal cation is bound by residues Asp8, Asp9, Ser39, and Asn90.

Belongs to the SurE nucleotidase family. The cofactor is a divalent metal cation.

It localises to the cytoplasm. The enzyme catalyses a ribonucleoside 5'-phosphate + H2O = a ribonucleoside + phosphate. In terms of biological role, nucleotidase that shows phosphatase activity on nucleoside 5'-monophosphates. The chain is 5'-nucleotidase SurE from Legionella pneumophila subsp. pneumophila (strain Philadelphia 1 / ATCC 33152 / DSM 7513).